The following is a 99-amino-acid chain: Ferredoxin (99 aa).

Residues 4 to 96 (YKIHLLCEEE…DCTISTHVEQ (93 aa)) form the 2Fe-2S ferredoxin-type domain. 4 residues coordinate [2Fe-2S] cluster: Cys42, Cys47, Cys50, and Cys80.

It belongs to the 2Fe2S plant-type ferredoxin family. Forms a complex with heterodimeric ferredoxin-thioredoxin reductase (FTR) and thioredoxin. [2Fe-2S] cluster serves as cofactor.

The protein localises to the plastid. It is found in the chloroplast. Ferredoxins are iron-sulfur proteins that transfer electrons in a wide variety of metabolic reactions. This chain is Ferredoxin (petF), found in Pyropia yezoensis (Susabi-nori).